We begin with the raw amino-acid sequence, 98 residues long: Integration host factor subunit alpha (98 aa).

The disordered stretch occupies residues 52 to 73 (FDLREKNQRPGRNPKTGEDIPI).

Belongs to the bacterial histone-like protein family. In terms of assembly, heterodimer of an alpha and a beta chain.

Functionally, this protein is one of the two subunits of integration host factor, a specific DNA-binding protein that functions in genetic recombination as well as in transcriptional and translational control. This chain is Integration host factor subunit alpha, found in Aeromonas hydrophila subsp. hydrophila (strain ATCC 7966 / DSM 30187 / BCRC 13018 / CCUG 14551 / JCM 1027 / KCTC 2358 / NCIMB 9240 / NCTC 8049).